Here is a 534-residue protein sequence, read N- to C-terminus: T-complex protein 1 subunit gamma (534 aa).

Residue M1 is modified to N-acetylmethionine. At S257 the chain carries Phosphoserine. The cysteines at positions 371 and 377 are disulfide-linked.

This sequence belongs to the TCP-1 chaperonin family. As to quaternary structure, heterooligomeric complex of about 850 to 900 kDa that forms two stacked rings, 12 to 16 nm in diameter.

The protein localises to the cytoplasm. In terms of biological role, molecular chaperone; assists the folding of proteins upon ATP hydrolysis. Known to play a role, in vitro, in the folding of actin and tubulin. In yeast may play a role in mitotic spindle formation. The protein is T-complex protein 1 subunit gamma (CCT3) of Saccharomyces cerevisiae (strain ATCC 204508 / S288c) (Baker's yeast).